The following is a 713-amino-acid chain: Nuclear poly(A) polymerase 1 (713 aa).

Residues 91 to 93 (FGS), 103 to 106 (ADID), aspartate 159, tyrosine 229, and 238 to 239 (GI) each bind ATP. Residues aspartate 104, aspartate 106, and aspartate 159 each coordinate Mg(2+). Positions 480 to 555 (FVFPGGVRPS…TLTDQPRNSK (76 aa)) are disordered. Over residues 507 to 526 (SSTSSAPAATTTTTEMSSES) the composition is skewed to low complexity.

Belongs to the poly(A) polymerase family. Monomer. Forms a complex with cleavage and polyadenylation specificity factor (CPSF) subunit PAPS4. The cofactor is Mg(2+). Mn(2+) is required as a cofactor. In terms of tissue distribution, expressed in stems, cotyledons, hypocotyls, radicle, leaves, and, to a lower extent, in roots (including primary and secondary roots as well as root tips) and flowers. In radicle, roots and leaves, mainly present in vascular tissues.

It is found in the nucleus. It catalyses the reaction RNA(n) + ATP = RNA(n)-3'-adenine ribonucleotide + diphosphate. Functionally, essential protein. Polymerase that creates the 3'-poly(A) tail of mRNA's. Also required for the endoribonucleolytic cleavage reaction at some polyadenylation sites. May acquire specificity through interaction with a cleavage and polyadenylation specificity factor (CPSF) at its C-terminus. The chain is Nuclear poly(A) polymerase 1 from Arabidopsis thaliana (Mouse-ear cress).